The sequence spans 606 residues: RUN and FYVE domain-containing protein 2 (606 aa).

An RUN domain is found at 37-169; it reads DSDYPPLQQF…IDANLCVKGE (133 aa). Residues 210-534 are a coiled coil; the sequence is EELNRQLNST…IKEANKALQG (325 aa). The FYVE-type zinc-finger motif lies at 540-598; that stretch reads DKEATHCKLCEKEFSLSKRKHHCRNCGEIFCNACSDNELPLPSSPKPVRVCDSCHALLI. 8 residues coordinate Zn(2+): Cys-546, Cys-549, Cys-562, Cys-565, Cys-570, Cys-573, Cys-590, and Cys-593.

As to quaternary structure, interacts with BMX. As to expression, expressed in brain, lung and testis.

The protein localises to the nucleus. This chain is RUN and FYVE domain-containing protein 2 (RUFY2), found in Homo sapiens (Human).